We begin with the raw amino-acid sequence, 156 residues long: SsrA-binding protein (156 aa).

It belongs to the SmpB family.

The protein localises to the cytoplasm. In terms of biological role, required for rescue of stalled ribosomes mediated by trans-translation. Binds to transfer-messenger RNA (tmRNA), required for stable association of tmRNA with ribosomes. tmRNA and SmpB together mimic tRNA shape, replacing the anticodon stem-loop with SmpB. tmRNA is encoded by the ssrA gene; the 2 termini fold to resemble tRNA(Ala) and it encodes a 'tag peptide', a short internal open reading frame. During trans-translation Ala-aminoacylated tmRNA acts like a tRNA, entering the A-site of stalled ribosomes, displacing the stalled mRNA. The ribosome then switches to translate the ORF on the tmRNA; the nascent peptide is terminated with the 'tag peptide' encoded by the tmRNA and targeted for degradation. The ribosome is freed to recommence translation, which seems to be the essential function of trans-translation. The sequence is that of SsrA-binding protein from Clostridium botulinum (strain Loch Maree / Type A3).